Here is a 124-residue protein sequence, read N- to C-terminus: uncharacterized protein (124 aa).

The tract at residues 1-65 (MAENSRYVRL…RPASSSNPDY (65 aa)) is disordered. Over residues 37–47 (LNSNDAESQQV) the composition is skewed to polar residues.

This is an uncharacterized protein from Microplitis demolitor (Parasitoid wasp).